The chain runs to 353 residues: MAFWIASSPHNHNHTKTPNLMRLVIYATLPGVLAQWYFFGWGNLIHIGLAMTTAIICEFTVLSLRKKPISHELFDGSALLTALLLGICLPALAPWWITVIGTMFAIVIVKQLYGGLGHNPFNPAMAGYVMLLVSFPLQMTLWQPPLTLVAVDLNFTNTLTTILTGFTVEGYSVEQVRTSIDGITMATPLDTLKTNTGLGLTVLESIKNPIFGENLALGWEWVNAGFLLGGLFLISRKAIAWQTPISFLLSLFICSFIGYSISPDSSASTMFHWFSGATMLGAFFILTDPVTGATSNKGRIIVGLLAGLLVYLIRTSGGYPDGVAFAILLCNMSAPLIDQYTRPRTYGHLKGDK.

Helical transmembrane passes span 20–39 (LMRL…WYFF), 68–88 (PISH…LGIC), and 129–149 (VMLL…LTLV). T187 carries the FMN phosphoryl threonine modification. Helical transmembrane passes span 215–235 (LALG…FLIS), 238–258 (AIAW…SFIG), 267–287 (ASTM…FILT), and 300–320 (IIVG…GGYP).

It belongs to the NqrB/RnfD family. As to quaternary structure, the complex is composed of six subunits: RnfA, RnfB, RnfC, RnfD, RnfE and RnfG. FMN is required as a cofactor.

It localises to the cell inner membrane. Functionally, part of a membrane-bound complex that couples electron transfer with translocation of ions across the membrane. The protein is Ion-translocating oxidoreductase complex subunit D of Colwellia psychrerythraea (strain 34H / ATCC BAA-681) (Vibrio psychroerythus).